The sequence spans 266 residues: Glucosamine-6-phosphate deaminase (266 aa).

Residue aspartate 72 is the Proton acceptor; for enolization step of the active site. Catalysis depends on aspartate 141, which acts as the For ring-opening step. The Proton acceptor; for ring-opening step role is filled by histidine 143. Glutamate 148 serves as the catalytic For ring-opening step.

Belongs to the glucosamine/galactosamine-6-phosphate isomerase family. NagB subfamily. Homohexamer.

The catalysed reaction is alpha-D-glucosamine 6-phosphate + H2O = beta-D-fructose 6-phosphate + NH4(+). Its pathway is amino-sugar metabolism; N-acetylneuraminate degradation; D-fructose 6-phosphate from N-acetylneuraminate: step 5/5. Allosterically activated by N-acetylglucosamine 6-phosphate (GlcNAc6P). Its function is as follows. Catalyzes the reversible isomerization-deamination of glucosamine 6-phosphate (GlcN6P) to form fructose 6-phosphate (Fru6P) and ammonium ion. This Serratia proteamaculans (strain 568) protein is Glucosamine-6-phosphate deaminase.